The following is a 415-amino-acid chain: Gamma-glutamyl phosphate reductase (415 aa).

The protein belongs to the gamma-glutamyl phosphate reductase family.

The protein localises to the cytoplasm. It catalyses the reaction L-glutamate 5-semialdehyde + phosphate + NADP(+) = L-glutamyl 5-phosphate + NADPH + H(+). It functions in the pathway amino-acid biosynthesis; L-proline biosynthesis; L-glutamate 5-semialdehyde from L-glutamate: step 2/2. Its function is as follows. Catalyzes the NADPH-dependent reduction of L-glutamate 5-phosphate into L-glutamate 5-semialdehyde and phosphate. The product spontaneously undergoes cyclization to form 1-pyrroline-5-carboxylate. In Clostridium perfringens (strain SM101 / Type A), this protein is Gamma-glutamyl phosphate reductase.